We begin with the raw amino-acid sequence, 521 residues long: Probable methylmalonate-semialdehyde/malonate-semialdehyde dehydrogenase [acylating], mitochondrial (521 aa).

Residues alanine 170, phenylalanine 172, lysine 196, glutamate 199, arginine 200, and serine 249 each coordinate NAD(+). Residue cysteine 304 is the Nucleophile of the active site. NAD(+) is bound at residue glutamate 404.

It belongs to the aldehyde dehydrogenase family. As to quaternary structure, homotetramer.

Its subcellular location is the mitochondrion. The catalysed reaction is 2-methyl-3-oxopropanoate + NAD(+) + CoA + H2O = propanoyl-CoA + hydrogencarbonate + NADH + H(+). The enzyme catalyses 3-oxopropanoate + NAD(+) + CoA + H2O = hydrogencarbonate + acetyl-CoA + NADH + H(+). Its function is as follows. Probable malonate and methylmalonate semialdehyde dehydrogenase involved in the catabolism of valine, thymine, and compounds catabolized by way of beta-alanine, including uracil and cytidine. This is Probable methylmalonate-semialdehyde/malonate-semialdehyde dehydrogenase [acylating], mitochondrial from Anopheles gambiae (African malaria mosquito).